Here is a 198-residue protein sequence, read N- to C-terminus: Putative 3-methyladenine DNA glycosylase (198 aa).

This sequence belongs to the DNA glycosylase MPG family.

The protein is Putative 3-methyladenine DNA glycosylase of Oceanobacillus iheyensis (strain DSM 14371 / CIP 107618 / JCM 11309 / KCTC 3954 / HTE831).